The chain runs to 219 residues: dTTP/UTP pyrophosphatase (219 aa).

Catalysis depends on Asp79, which acts as the Proton acceptor.

This sequence belongs to the Maf family. YhdE subfamily. It depends on a divalent metal cation as a cofactor.

It is found in the cytoplasm. The catalysed reaction is dTTP + H2O = dTMP + diphosphate + H(+). It carries out the reaction UTP + H2O = UMP + diphosphate + H(+). Functionally, nucleoside triphosphate pyrophosphatase that hydrolyzes dTTP and UTP. May have a dual role in cell division arrest and in preventing the incorporation of modified nucleotides into cellular nucleic acids. The chain is dTTP/UTP pyrophosphatase from Oleidesulfovibrio alaskensis (strain ATCC BAA-1058 / DSM 17464 / G20) (Desulfovibrio alaskensis).